We begin with the raw amino-acid sequence, 247 residues long: Uridylate kinase (247 aa).

19-22 (KISG) serves as a coordination point for ATP. UMP is bound at residue Gly-61. ATP-binding residues include Gly-62 and Arg-66. Residues Asp-81 and 142-149 (TGNPFFTT) contribute to the UMP site. ATP-binding residues include Thr-169, Gln-170, Tyr-175, and Asp-178.

This sequence belongs to the UMP kinase family. Homohexamer.

Its subcellular location is the cytoplasm. The catalysed reaction is UMP + ATP = UDP + ADP. The protein operates within pyrimidine metabolism; CTP biosynthesis via de novo pathway; UDP from UMP (UMPK route): step 1/1. Its activity is regulated as follows. Inhibited by UTP. In terms of biological role, catalyzes the reversible phosphorylation of UMP to UDP. The chain is Uridylate kinase from Wolbachia pipientis wMel.